Reading from the N-terminus, the 299-residue chain is Oxygen-dependent coproporphyrinogen-III oxidase (299 aa).

S92 is a binding site for substrate. A divalent metal cation is bound by residues H96 and H106. H106 functions as the Proton donor in the catalytic mechanism. 108–110 (NVR) serves as a coordination point for substrate. 2 residues coordinate a divalent metal cation: H145 and H175. The important for dimerization stretch occupies residues 239–274 (YVEFNLVYDRGTLFGLQSGGRAESILMSLPPQVRWE). 257–259 (GGR) serves as a coordination point for substrate.

It belongs to the aerobic coproporphyrinogen-III oxidase family. Homodimer. It depends on a divalent metal cation as a cofactor.

The protein resides in the cytoplasm. It catalyses the reaction coproporphyrinogen III + O2 + 2 H(+) = protoporphyrinogen IX + 2 CO2 + 2 H2O. It functions in the pathway porphyrin-containing compound metabolism; protoporphyrin-IX biosynthesis; protoporphyrinogen-IX from coproporphyrinogen-III (O2 route): step 1/1. Functionally, involved in the heme biosynthesis. Catalyzes the aerobic oxidative decarboxylation of propionate groups of rings A and B of coproporphyrinogen-III to yield the vinyl groups in protoporphyrinogen-IX. The polypeptide is Oxygen-dependent coproporphyrinogen-III oxidase (Xanthomonas campestris pv. campestris (strain 8004)).